Consider the following 219-residue polypeptide: Chalcone--flavanone isomerase (219 aa).

Residues Thr-50, Asn-115, and Ser-188 each contribute to the substrate site.

The protein belongs to the chalcone isomerase family.

It carries out the reaction a chalcone = a flavanone.. The protein operates within secondary metabolite biosynthesis; flavonoid biosynthesis. Catalyzes the intramolecular cyclization of bicyclic chalcones into tricyclic (S)-flavanones. Responsible for the isomerization of 4,2',4',6'-tetrahydroxychalcone (also termed chalcone) into naringenin. The chain is Chalcone--flavanone isomerase (CHI) from Clitoria ternatea (Butterfly pea).